A 190-amino-acid polypeptide reads, in one-letter code: Nuclear transcription factor Y subunit B-2 (190 aa).

The interval 1-30 (MGDSDRDSGGGQNGNNQNGQSSLSPREQDR) is disordered. A DNA-binding region spans residues 32–38 (LPIANVS). The interval 59 to 70 (MQECVSEFISFV) is subunit association domain (SAD). A disordered region spans residues 168–190 (HMYGATGGGSDSGGGAASGRTRT). The span at 172 to 184 (ATGGGSDSGGGAA) shows a compositional bias: gly residues.

The protein belongs to the NFYB/HAP3 subunit family. As to quaternary structure, heterotrimeric transcription factor composed of three components, NF-YA, NF-YB and NF-YC. NF-YB and NF-YC must interact and dimerize for NF-YA association and DNA binding. Binds directly with DPB3-1. Ubiquitous. Predominantly expressed in flowers and siliques.

It localises to the nucleus. Component of the NF-Y/HAP transcription factor complex. The NF-Y complex stimulates the transcription of various genes by recognizing and binding to a CCAAT motif in promoters. The sequence is that of Nuclear transcription factor Y subunit B-2 from Arabidopsis thaliana (Mouse-ear cress).